The primary structure comprises 342 residues: Large ribosomal subunit protein uL3 (342 aa).

It belongs to the universal ribosomal protein uL3 family. Part of the 50S ribosomal subunit. Forms a cluster with proteins L14 and L24e.

In terms of biological role, one of the primary rRNA binding proteins, it binds directly near the 3'-end of the 23S rRNA, where it nucleates assembly of the 50S subunit. The polypeptide is Large ribosomal subunit protein uL3 (Pyrobaculum islandicum (strain DSM 4184 / JCM 9189 / GEO3)).